Here is a 522-residue protein sequence, read N- to C-terminus: MNSFFGTPAASWCLLESDVSSAPDKEAGRERRALSVQQRGGPAWSGSLEWSRQSAGDRRRLGLSRQTAKSSWSRSRDRTCCCRRAWWILVPAADRARRERFIMNEKWDTNSSENWHPIWNVNDTKHHLYSDINITYVNYYLHQPQVAAIFIISYFLIFFLCMMGNTVVCFIVMRNKHMHTVTNLFILNLAISDLLVGIFCMPITLLDNIIAGWPFGNTMCKISGLVQGISVAASVFTLVAIAVDRFQCVVYPFKPKLTIKTAFVIIMIIWVLAITIMSPSAVMLHVQEEKYYRVRLNSQNKTSPVYWCREDWPNQEMRKIYTTVLFANIYLAPLSLIVIMYGRIGISLFRAAVPHTGRKNQEQWHVVSRKKQKIIKMLLIVALLFILSWLPLWTLMMLSDYADLSPNELQIINIYIYPFAHWLAFGNSSVNPIIYGFFNENFRRGFQEAFQLQLCQKRAKPMEAYALKAKSHVLINTSNQLVQESTFQNPHGETLLYRKSAEKPQQELVMEELKETTNSSEI.

The Extracellular segment spans residues 1 to 147 (MNSFFGTPAA…NYYLHQPQVA (147 aa)). The interval 25-49 (KEAGRERRALSVQQRGGPAWSGSLE) is disordered. Residues Asn110, Asn122, and Asn133 are each glycosylated (N-linked (GlcNAc...) asparagine). The chain crosses the membrane as a helical span at residues 148 to 168 (AIFIISYFLIFFLCMMGNTVV). At 169–184 (CFIVMRNKHMHTVTNL) the chain is on the cytoplasmic side. The helical transmembrane segment at 185-205 (FILNLAISDLLVGIFCMPITL) threads the bilayer. Residues 206–221 (LDNIIAGWPFGNTMCK) lie on the Extracellular side of the membrane. Cys220 and Cys308 are oxidised to a cystine. The helical transmembrane segment at 222 to 242 (ISGLVQGISVAASVFTLVAIA) threads the bilayer. Residues 243–262 (VDRFQCVVYPFKPKLTIKTA) lie on the Cytoplasmic side of the membrane. Residues 263-283 (FVIIMIIWVLAITIMSPSAVM) form a helical membrane-spanning segment. At 284-319 (LHVQEEKYYRVRLNSQNKTSPVYWCREDWPNQEMRK) the chain is on the extracellular side. An N-linked (GlcNAc...) asparagine glycan is attached at Asn300. Residues 320-340 (IYTTVLFANIYLAPLSLIVIM) form a helical membrane-spanning segment. The Cytoplasmic portion of the chain corresponds to 341–377 (YGRIGISLFRAAVPHTGRKNQEQWHVVSRKKQKIIKM). Residues 378–398 (LLIVALLFILSWLPLWTLMML) form a helical membrane-spanning segment. The Extracellular segment spans residues 399-413 (SDYADLSPNELQIIN). The helical transmembrane segment at 414–434 (IYIYPFAHWLAFGNSSVNPII) threads the bilayer. Residues 435–522 (YGFFNENFRR…LKETTNSSEI (88 aa)) are Cytoplasmic-facing.

This sequence belongs to the G-protein coupled receptor 1 family. Isoform 1 is abundant in placenta. Relatively highly expressed in thymus, testis, and small intestine. Expressed at low levels in several tissues including spleen, prostate, brain, heart, ovary, colon, kidney, lung, liver and pancreas and not expressed in skeletal muscle and leukocytes. Isoform 2 expression is highest in placenta (but at relatively low level compared to isoform 1). Very low level of expression in numerous tissues including adipose tissue and many brain regions. Isoform 3 is expressed in brain and heart and, at lower levels, in kidney, liver, lung and pancreas.

The protein resides in the cell membrane. Receptor for NPAF (A-18-F-amide) and NPFF (F-8-F-amide) neuropeptides, also known as morphine-modulating peptides. Can also be activated by a variety of naturally occurring or synthetic FMRF-amide like ligands. This receptor mediates its action by association with G proteins that activate a phosphatidylinositol-calcium second messenger system. This Homo sapiens (Human) protein is Neuropeptide FF receptor 2.